The following is a 58-amino-acid chain: Probable ferredoxin (58 aa).

4Fe-4S ferredoxin-type domains lie at 2-30 (VAKVNVDLCTGCGSCVDECPAAAISLNDD) and 31-58 (GIATVDESECLDCGSCEDACPNNAITIE). Residues Cys10, Cys13, Cys16, Cys20, Cys40, Cys43, Cys46, and Cys50 each contribute to the [4Fe-4S] cluster site.

[4Fe-4S] cluster is required as a cofactor.

Its function is as follows. Ferredoxins are iron-sulfur proteins that transfer electrons in a wide variety of metabolic reactions. This chain is Probable ferredoxin, found in Methanosarcina thermophila.